The chain runs to 470 residues: Acetyl-CoA decarbonylase/synthase complex subunit beta 2 (470 aa).

Positions 190, 193, 279, and 281 each coordinate [Ni-Fe-S] cluster.

The protein belongs to the CdhC family. As to quaternary structure, monomer. The ACDS complex is made up of alpha, epsilon, beta, gamma and delta chains with a probable stoichiometry of (alpha(2)epsilon(2))(4)-beta(8)-(gamma(1)delta(1))(8) (Potential). [Ni-Fe-S] cluster is required as a cofactor.

It carries out the reaction Co(I)-[corrinoid Fe-S protein] + acetyl-CoA + H(+) = methyl-Co(III)-[corrinoid Fe-S protein] + CO + CoA. Its pathway is one-carbon metabolism; methanogenesis from acetate. Its function is as follows. Part of a complex that catalyzes the reversible cleavage of acetyl-CoA, allowing growth on acetate as sole source of carbon and energy. The alpha-epsilon complex generates CO from CO(2), while the beta subunit (this protein) combines the CO with CoA and a methyl group to form acetyl-CoA. The methyl group, which is incorporated into acetyl-CoA, is transferred to the beta subunit by a corrinoid iron-sulfur protein (the gamma-delta complex). The polypeptide is Acetyl-CoA decarbonylase/synthase complex subunit beta 2 (cdhC2) (Methanosarcina mazei (strain ATCC BAA-159 / DSM 3647 / Goe1 / Go1 / JCM 11833 / OCM 88) (Methanosarcina frisia)).